A 121-amino-acid polypeptide reads, in one-letter code: Small ribosomal subunit protein uS13 (121 aa).

The disordered stretch occupies residues 91 to 121 (HRRGLPVRGQNSKNNARTRKGPRRTVANKKK). Residues 106–121 (ARTRKGPRRTVANKKK) are compositionally biased toward basic residues.

The protein belongs to the universal ribosomal protein uS13 family. As to quaternary structure, part of the 30S ribosomal subunit. Forms a loose heterodimer with protein S19. Forms two bridges to the 50S subunit in the 70S ribosome.

In terms of biological role, located at the top of the head of the 30S subunit, it contacts several helices of the 16S rRNA. In the 70S ribosome it contacts the 23S rRNA (bridge B1a) and protein L5 of the 50S subunit (bridge B1b), connecting the 2 subunits; these bridges are implicated in subunit movement. Contacts the tRNAs in the A and P-sites. The protein is Small ribosomal subunit protein uS13 of Bacillus cereus (strain AH187).